Reading from the N-terminus, the 442-residue chain is Trigger factor (442 aa).

Residues 170-250 (GDIATVDYHE…LKALKQRQLP (81 aa)) form the PPIase FKBP-type domain.

It belongs to the FKBP-type PPIase family. Tig subfamily.

It localises to the cytoplasm. It carries out the reaction [protein]-peptidylproline (omega=180) = [protein]-peptidylproline (omega=0). Involved in protein export. Acts as a chaperone by maintaining the newly synthesized protein in an open conformation. Functions as a peptidyl-prolyl cis-trans isomerase. In Treponema pallidum (strain Nichols), this protein is Trigger factor (tig).